The sequence spans 111 residues: Cytochrome c (111 aa).

At Ala1 the chain carries N-acetylalanine. The heme c site is built by Cys22, Cys25, and His26. An N6,N6,N6-trimethyllysine modification is found at Lys80. Met88 provides a ligand contact to heme c. The residue at position 94 (Lys94) is an N6,N6,N6-trimethyllysine.

This sequence belongs to the cytochrome c family. In terms of processing, binds 1 heme c group covalently per subunit.

It localises to the mitochondrion intermembrane space. Its function is as follows. Electron carrier protein. The oxidized form of the cytochrome c heme group can accept an electron from the heme group of the cytochrome c1 subunit of cytochrome reductase. Cytochrome c then transfers this electron to the cytochrome oxidase complex, the final protein carrier in the mitochondrial electron-transport chain. The chain is Cytochrome c from Cucurbita maxima (Pumpkin).